The following is a 238-amino-acid chain: Purine nucleoside phosphorylase DeoD-type (238 aa).

An a purine D-ribonucleoside-binding site is contributed by H4. Phosphate contacts are provided by residues G20, R24, R43, and 87-90 (RVGT). A purine D-ribonucleoside contacts are provided by residues 179-181 (EME) and 203-204 (SN).

Belongs to the PNP/UDP phosphorylase family. As to quaternary structure, homohexamer; trimer of homodimers.

The enzyme catalyses a purine D-ribonucleoside + phosphate = a purine nucleobase + alpha-D-ribose 1-phosphate. It catalyses the reaction a purine 2'-deoxy-D-ribonucleoside + phosphate = a purine nucleobase + 2-deoxy-alpha-D-ribose 1-phosphate. Its function is as follows. Catalyzes the reversible phosphorolytic breakdown of the N-glycosidic bond in the beta-(deoxy)ribonucleoside molecules, with the formation of the corresponding free purine bases and pentose-1-phosphate. The polypeptide is Purine nucleoside phosphorylase DeoD-type (Lacticaseibacillus casei (strain BL23) (Lactobacillus casei)).